The sequence spans 387 residues: Protein RecA, chromosomal (387 aa).

Position 80–87 (80–87) interacts with ATP; sequence GPESSGKT. The interval 352-387 is disordered; the sequence is EVAETTEDTSTKAKATKAKKEEKVVETEEIELELED. Residues 378–387 are compositionally biased toward acidic residues; it reads TEEIELELED.

This sequence belongs to the RecA family.

The protein resides in the cytoplasm. Its function is as follows. Can catalyze the hydrolysis of ATP in the presence of single-stranded DNA, the ATP-dependent uptake of single-stranded DNA by duplex DNA, and the ATP-dependent hybridization of homologous single-stranded DNAs. It interacts with LexA causing its activation and leading to its autocatalytic cleavage. The sequence is that of Protein RecA, chromosomal from Lactococcus lactis subsp. lactis (strain IL1403) (Streptococcus lactis).